The following is a 237-amino-acid chain: Leucyl/phenylalanyl-tRNA--protein transferase (237 aa).

Belongs to the L/F-transferase family.

It localises to the cytoplasm. The catalysed reaction is N-terminal L-lysyl-[protein] + L-leucyl-tRNA(Leu) = N-terminal L-leucyl-L-lysyl-[protein] + tRNA(Leu) + H(+). The enzyme catalyses N-terminal L-arginyl-[protein] + L-leucyl-tRNA(Leu) = N-terminal L-leucyl-L-arginyl-[protein] + tRNA(Leu) + H(+). It carries out the reaction L-phenylalanyl-tRNA(Phe) + an N-terminal L-alpha-aminoacyl-[protein] = an N-terminal L-phenylalanyl-L-alpha-aminoacyl-[protein] + tRNA(Phe). In terms of biological role, functions in the N-end rule pathway of protein degradation where it conjugates Leu, Phe and, less efficiently, Met from aminoacyl-tRNAs to the N-termini of proteins containing an N-terminal arginine or lysine. This is Leucyl/phenylalanyl-tRNA--protein transferase from Shewanella baltica (strain OS195).